Here is a 208-residue protein sequence, read N- to C-terminus: Platelet-activating factor receptor (208 aa).

Residues 1-16 lie on the Extracellular side of the membrane; that stretch reads MEPHDSSHVDSEFRYT. Residues 17-38 traverse the membrane as a helical segment; that stretch reads LFPIVYSIIFVLGVIANGYVLW. The Cytoplasmic segment spans residues 39–54; it reads VFARLYPSKKFNEIKI. A helical transmembrane segment spans residues 55-74; sequence FMVNLTMADMLFLITLPLWI. The Extracellular segment spans residues 75–91; it reads VYYQNGGNWIFPKFLCN. An intrachain disulfide couples C90 to C173. The chain crosses the membrane as a helical span at residues 92–113; the sequence is LAGCLFFINTYCSVAFLGVITY. Topologically, residues 114–133 are cytoplasmic; the sequence is NRFQAVTRPIKTAQANTRKR. The helical transmembrane segment at 134-155 threads the bilayer; the sequence is GISLSLVIWVAIVGAASYFFIL. At 156 to 184 the chain is on the extracellular side; it reads DSTNTVPNSAGSGNITRCFEHYEKGSVPV. N169 carries N-linked (GlcNAc...) asparagine glycosylation. The helical transmembrane segment at 185 to 205 threads the bilayer; it reads LIIHIFIVFSFFLVFLIILFC. At 206–208 the chain is on the cytoplasmic side; the sequence is NLV.

This sequence belongs to the G-protein coupled receptor 1 family. As to quaternary structure, interacts with ARRB1.

It is found in the cell membrane. Functionally, receptor for platelet activating factor, a chemotactic phospholipid mediator that possesses potent inflammatory, smooth-muscle contractile and hypotensive activity. Seems to mediate its action via a G protein that activates a phosphatidylinositol-calcium second messenger system. The polypeptide is Platelet-activating factor receptor (PTAFR) (Macaca mulatta (Rhesus macaque)).